A 201-amino-acid chain; its full sequence is Casparian strip membrane protein 4 (201 aa).

The tract at residues 1–23 is disordered; the sequence is MEGKAAVTTSTEHGDGEASRTAA. The Cytoplasmic segment spans residues 1 to 41; the sequence is MEGKAAVTTSTEHGDGEASRTAARTVVSGSSRGGAASRALS. A helical membrane pass occupies residues 42–62; it reads VADLILRVVAVVAIVDSAIAM. Residues 63-87 are Extracellular-facing; sequence GTTNQTLPFFTQFLRFKAQYSDLPT. A glycan (N-linked (GlcNAc...) asparagine) is linked at asparagine 66. A helical membrane pass occupies residues 88–108; the sequence is LTLFVVANSAVTAYLVLSIPL. The Cytoplasmic portion of the chain corresponds to 109 to 122; that stretch reads SVVHIIRSRASYSR. Residues 123-143 traverse the membrane as a helical segment; that stretch reads LVLIFLDSVMLALVAAVASAS. Residues 144–172 are Extracellular-facing; it reads AAIVYLAHKGNVRANWFAVCQQFDSFCER. Residues 173–193 traverse the membrane as a helical segment; that stretch reads ISGPLIGSFAAMAVLLLLVLL. Residues 194–201 are Cytoplasmic-facing; that stretch reads SAAALARR.

Belongs to the Casparian strip membrane proteins (CASP) family. In terms of assembly, homodimer and heterodimers.

It localises to the cell membrane. In terms of biological role, regulates membrane-cell wall junctions and localized cell wall deposition. Required for establishment of the Casparian strip membrane domain (CSD) and the subsequent formation of Casparian strips, a cell wall modification of the root endodermis that determines an apoplastic barrier between the intraorganismal apoplasm and the extraorganismal apoplasm and prevents lateral diffusion. This is Casparian strip membrane protein 4 from Oryza sativa subsp. japonica (Rice).